The following is a 279-amino-acid chain: Acetylglutamate kinase (279 aa).

Substrate contacts are provided by residues 64–65, R86, and N177; that span reads GG.

Belongs to the acetylglutamate kinase family. ArgB subfamily.

The protein resides in the cytoplasm. The catalysed reaction is N-acetyl-L-glutamate + ATP = N-acetyl-L-glutamyl 5-phosphate + ADP. It participates in amino-acid biosynthesis; L-arginine biosynthesis; N(2)-acetyl-L-ornithine from L-glutamate: step 2/4. In terms of biological role, catalyzes the ATP-dependent phosphorylation of N-acetyl-L-glutamate. This chain is Acetylglutamate kinase, found in Campylobacter jejuni subsp. jejuni serotype O:23/36 (strain 81-176).